We begin with the raw amino-acid sequence, 299 residues long: MWFKQISFYPLNKEKLPEADVLADKLAEAEFTHCQGLDWFSEGFTAPVSFSPELVFPADFTLRVALKKEEKVLPAGVIRDILEEKVAEIQNNEARNVGRKEKQELKEQITDDLLPRAFTRSSRTEAVFNTRHGYLLVNNAASAKAENILTKLREALGGLEASLPNTKQSPSSLMTGWLLQGHCEGGFELDSDCELKGTGDIVPVVKVSKQDLTADEVVQHVKNGKTVTQLGLVWREQIAFILTQDFTLKRIQYLDVLQEEAESNGDDAAGLAFASQILMAESVSTMLEELVSYLGGWQD.

Belongs to the RdgC family.

Its subcellular location is the cytoplasm. The protein resides in the nucleoid. Its function is as follows. May be involved in recombination. This Neisseria meningitidis serogroup B (strain ATCC BAA-335 / MC58) protein is Recombination-associated protein RdgC.